A 145-amino-acid polypeptide reads, in one-letter code: Snaclec salmorin subunit B (145 aa).

The N-terminal stretch at 1 to 23 is a signal peptide; that stretch reads MGRFIFVSFGLLVVFVSLSGTGA. Intrachain disulfides connect Cys-25–Cys-36, Cys-53–Cys-141, and Cys-118–Cys-133. The region spanning 32–142 is the C-type lectin domain; sequence YEGHCYKLFN…CRMEAYFVCE (111 aa). 2 residues coordinate Ca(2+): Ser-64 and Glu-70. A Ca(2+)-binding site is contributed by Glu-142.

It belongs to the snaclec family. As to quaternary structure, heterodimer of subunits A and B; disulfide-linked. In terms of tissue distribution, expressed by the venom gland.

Its subcellular location is the secreted. In terms of biological role, inhibits thrombin-induced fibrinogen clotting and factor Xa-induced prothrombin activation. Binds to thrombin and prothrombin exosites. The polypeptide is Snaclec salmorin subunit B (Gloydius brevicauda (Korean slamosa snake)).